Consider the following 452-residue polypeptide: Probable mannose-6-phosphate isomerase (452 aa).

4 residues coordinate Zn(2+): Gln-141, His-143, Glu-168, and His-295. Residue Arg-314 is part of the active site.

Belongs to the mannose-6-phosphate isomerase type 1 family. Zn(2+) serves as cofactor.

Its subcellular location is the cytoplasm. The enzyme catalyses D-mannose 6-phosphate = D-fructose 6-phosphate. It participates in nucleotide-sugar biosynthesis; GDP-alpha-D-mannose biosynthesis; alpha-D-mannose 1-phosphate from D-fructose 6-phosphate: step 1/2. Functionally, involved in the synthesis of the GDP-mannose and dolichol-phosphate-mannose required for a number of critical mannosyl transfer reactions. This Dictyostelium discoideum (Social amoeba) protein is Probable mannose-6-phosphate isomerase (mpi).